The following is a 274-amino-acid chain: Rhamnulose-1-phosphate aldolase (274 aa).

The active site involves Glu117. Zn(2+)-binding residues include His141, His143, and His212.

The protein belongs to the aldolase class II family. RhaD subfamily. In terms of assembly, homotetramer. It depends on Zn(2+) as a cofactor.

It is found in the cytoplasm. It catalyses the reaction L-rhamnulose 1-phosphate = (S)-lactaldehyde + dihydroxyacetone phosphate. It functions in the pathway carbohydrate degradation; L-rhamnose degradation; glycerone phosphate from L-rhamnose: step 3/3. Its function is as follows. Catalyzes the reversible cleavage of L-rhamnulose-1-phosphate to dihydroxyacetone phosphate (DHAP) and L-lactaldehyde. This chain is Rhamnulose-1-phosphate aldolase, found in Escherichia coli (strain K12 / MC4100 / BW2952).